We begin with the raw amino-acid sequence, 421 residues long: Immunoglobulin heavy constant epsilon (421 aa).

4 Ig-like domains span residues 5 to 97 (PQLY…VNIT), 99 to 184 (PTLE…KVTS), 201 to 301 (PRGV…RSIT), and 310 to 410 (PEVY…KTIS). Cys-23 and Cys-75 are disulfide-bonded. Asn-43, Asn-72, Asn-84, Asn-95, Asn-166, Asn-238, Asn-261, Asn-365, and Asn-415 each carry an N-linked (GlcNAc...) asparagine glycan. 3 disulfide bridges follow: Cys-121–Cys-180, Cys-226–Cys-285, and Cys-330–Cys-392.

As to quaternary structure, the basic structural unit consists of two identical heavy chains and two identical light chains; disulfide-linked. N-terminal variable regions of the heavy and light chains form the antigen binding sites, whereas the C-terminal constant regions of the heavy chains interact with immune receptors to mediate effector functions.

Its subcellular location is the secreted. The protein localises to the cell membrane. In terms of biological role, constant region of immunoglobulin heavy chains. Immunoglobulins, also known as antibodies, are membrane-bound or secreted glycoproteins produced by B lymphocytes. In the recognition phase of humoral immunity, the membrane-bound immunoglobulins serve as receptors which, upon binding of a specific antigen, trigger the clonal expansion and differentiation of B lymphocytes into immunoglobulins-secreting plasma cells. Secreted immunoglobulins mediate the effector phase of humoral immunity, which results in the elimination of bound antigens. The antigen binding site is formed by the variable domain of one heavy chain, together with that of its associated light chain. Thus, each immunoglobulin has two antigen binding sites with remarkable affinity for a particular antigen. The variable domains are assembled by a process called V-(D)-J rearrangement and can then be subjected to somatic hypermutations which, after exposure to antigen and selection, allow affinity maturation for a particular antigen. In Mus musculus (Mouse), this protein is Immunoglobulin heavy constant epsilon.